The following is a 749-amino-acid chain: 5-methyltetrahydropteroyltriglutamate--homocysteine methyltransferase (749 aa).

Residues 15-18 (RELK) and K114 contribute to the 5-methyltetrahydropteroyltri-L-glutamate site. L-homocysteine-binding positions include 425 to 427 (IGS) and E478. L-methionine contacts are provided by residues 425-427 (IGS) and E478. W555 serves as a coordination point for 5-methyltetrahydropteroyltri-L-glutamate. D593 is an L-homocysteine binding site. D593 lines the L-methionine pocket. E599 provides a ligand contact to 5-methyltetrahydropteroyltri-L-glutamate. Zn(2+) is bound by residues H636, C638, and E660. Catalysis depends on H689, which acts as the Proton donor. A Zn(2+)-binding site is contributed by C721.

This sequence belongs to the vitamin-B12 independent methionine synthase family. The cofactor is Zn(2+).

The enzyme catalyses 5-methyltetrahydropteroyltri-L-glutamate + L-homocysteine = tetrahydropteroyltri-L-glutamate + L-methionine. It functions in the pathway amino-acid biosynthesis; L-methionine biosynthesis via de novo pathway; L-methionine from L-homocysteine (MetE route): step 1/1. Functionally, catalyzes the transfer of a methyl group from 5-methyltetrahydrofolate to homocysteine resulting in methionine formation. The protein is 5-methyltetrahydropteroyltriglutamate--homocysteine methyltransferase of Streptococcus pneumoniae serotype 19F (strain G54).